We begin with the raw amino-acid sequence, 230 residues long: Ribosome maturation factor RimM (230 aa).

The PRC barrel domain maps to 149–230 (ADEFYWVDLI…RVVVDWEADY (82 aa)).

This sequence belongs to the RimM family. As to quaternary structure, binds ribosomal protein uS19.

Its subcellular location is the cytoplasm. An accessory protein needed during the final step in the assembly of 30S ribosomal subunit, possibly for assembly of the head region. Essential for efficient processing of 16S rRNA. May be needed both before and after RbfA during the maturation of 16S rRNA. It has affinity for free ribosomal 30S subunits but not for 70S ribosomes. The chain is Ribosome maturation factor RimM from Burkholderia mallei (strain NCTC 10229).